The sequence spans 130 residues: MAQVQYYGTGRRKSSVARVRLVPGDGRIIVNKHDIREYIPSEALIEMVKQPLVLTETLGSYDVLVNVHGGGFAGQAGAIRHGIARALLEVDPEFRAVLKRAGLLTRDARVKERKKYGLKGARRAPQFSKR.

This sequence belongs to the universal ribosomal protein uS9 family.

This Geobacillus thermodenitrificans (strain NG80-2) protein is Small ribosomal subunit protein uS9.